We begin with the raw amino-acid sequence, 406 residues long: Phosphopentomutase (406 aa).

Mn(2+) contacts are provided by Asp-10, Asp-305, His-310, Asp-346, His-347, and His-358.

It belongs to the phosphopentomutase family. Requires Mn(2+) as cofactor.

The protein localises to the cytoplasm. The catalysed reaction is 2-deoxy-alpha-D-ribose 1-phosphate = 2-deoxy-D-ribose 5-phosphate. It catalyses the reaction alpha-D-ribose 1-phosphate = D-ribose 5-phosphate. The protein operates within carbohydrate degradation; 2-deoxy-D-ribose 1-phosphate degradation; D-glyceraldehyde 3-phosphate and acetaldehyde from 2-deoxy-alpha-D-ribose 1-phosphate: step 1/2. In terms of biological role, isomerase that catalyzes the conversion of deoxy-ribose 1-phosphate (dRib-1-P) and ribose 1-phosphate (Rib-1-P) to deoxy-ribose 5-phosphate (dRib-5-P) and ribose 5-phosphate (Rib-5-P), respectively. The chain is Phosphopentomutase from Rhizobium johnstonii (strain DSM 114642 / LMG 32736 / 3841) (Rhizobium leguminosarum bv. viciae).